Here is a 236-residue protein sequence, read N- to C-terminus: Uridylate kinase (236 aa).

10–13 provides a ligand contact to ATP; that stretch reads KLSG. G52 serves as a coordination point for UMP. The ATP site is built by G53 and R57. Residues D72 and 133–140 contribute to the UMP site; that span reads TGNPFFTT. ATP contacts are provided by T160, Y166, and D169.

This sequence belongs to the UMP kinase family. Homohexamer.

It is found in the cytoplasm. The enzyme catalyses UMP + ATP = UDP + ADP. The protein operates within pyrimidine metabolism; CTP biosynthesis via de novo pathway; UDP from UMP (UMPK route): step 1/1. Inhibited by UTP. Functionally, catalyzes the reversible phosphorylation of UMP to UDP. The sequence is that of Uridylate kinase from Polaromonas naphthalenivorans (strain CJ2).